A 511-amino-acid polypeptide reads, in one-letter code: Maturase K (511 aa).

This sequence belongs to the intron maturase 2 family. MatK subfamily.

Its subcellular location is the plastid. The protein localises to the chloroplast. Functionally, usually encoded in the trnK tRNA gene intron. Probably assists in splicing its own and other chloroplast group II introns. In Nardus stricta (Mat-grass), this protein is Maturase K.